Here is a 313-residue protein sequence, read N- to C-terminus: Ribosomal RNA small subunit methyltransferase H (313 aa).

S-adenosyl-L-methionine is bound by residues 33 to 35 (AGH), E52, F80, D101, and Q108.

The protein belongs to the methyltransferase superfamily. RsmH family.

It is found in the cytoplasm. It carries out the reaction cytidine(1402) in 16S rRNA + S-adenosyl-L-methionine = N(4)-methylcytidine(1402) in 16S rRNA + S-adenosyl-L-homocysteine + H(+). Specifically methylates the N4 position of cytidine in position 1402 (C1402) of 16S rRNA. The protein is Ribosomal RNA small subunit methyltransferase H of Spiroplasma kunkelii.